Reading from the N-terminus, the 572-residue chain is Isocitrate dehydrogenase kinase/phosphatase (572 aa).

ATP is bound by residues 317-323 (APGVRGM) and Lys338. Asp373 is an active-site residue.

It belongs to the AceK family.

The protein localises to the cytoplasm. The enzyme catalyses L-seryl-[isocitrate dehydrogenase] + ATP = O-phospho-L-seryl-[isocitrate dehydrogenase] + ADP + H(+). Bifunctional enzyme which can phosphorylate or dephosphorylate isocitrate dehydrogenase (IDH) on a specific serine residue. This is a regulatory mechanism which enables bacteria to bypass the Krebs cycle via the glyoxylate shunt in response to the source of carbon. When bacteria are grown on glucose, IDH is fully active and unphosphorylated, but when grown on acetate or ethanol, the activity of IDH declines drastically concomitant with its phosphorylation. The protein is Isocitrate dehydrogenase kinase/phosphatase of Ectopseudomonas mendocina (strain ymp) (Pseudomonas mendocina).